Here is a 471-residue protein sequence, read N- to C-terminus: Secretogranin-3 (471 aa).

A signal peptide spans 1–22 (MGFLWTGSWILVLVLNSGPIQA). Disordered stretches follow at residues 24–45 (PKPEGSQDKSLHNRELSAERPL), 89–108 (TVEKERQSIRSPPFDNQLNV), and 345–404 (KLEK…TDEA). Residues 28–45 (GSQDKSLHNRELSAERPL) are compositionally biased toward basic and acidic residues. Position 40 is a phosphoserine (S40). An O-linked (Xyl...) (chondroitin sulfate) serine glycan is attached at S40. 2 stretches are compositionally biased toward basic and acidic residues: residues 345 to 355 (KLEKNTTDSKS) and 364 to 404 (KSQE…TDEA). At S365 the chain carries Phosphoserine.

Interacts with CHGA. Interacts with secretogranin II/SCG2. Interacts (via C-terminus) with CPE. Expressed in various brain areas, with highest levels in the arcuate nucleus and the lateral hypothalamic area, as well as the paraventricular nucleus and the ventromedial hypothalamus (at protein level).

It is found in the cytoplasmic vesicle. The protein localises to the secretory vesicle. It localises to the secretory vesicle membrane. Its subcellular location is the secreted. Member of the granin protein family that regulates the biogenesis of secretory granules. Acts as a sorting receptor for intragranular proteins including chromogranin A/CHGA. May also play a role in angiogenesis. Promotes endothelial proliferation, migration and tube formation through MEK/ERK signaling pathway. The protein is Secretogranin-3 (Scg3) of Mus musculus (Mouse).